Here is a 95-residue protein sequence, read N- to C-terminus: Co-chaperonin GroES (95 aa).

Belongs to the GroES chaperonin family. In terms of assembly, heptamer of 7 subunits arranged in a ring. Interacts with the chaperonin GroEL.

It is found in the cytoplasm. In terms of biological role, together with the chaperonin GroEL, plays an essential role in assisting protein folding. The GroEL-GroES system forms a nano-cage that allows encapsulation of the non-native substrate proteins and provides a physical environment optimized to promote and accelerate protein folding. GroES binds to the apical surface of the GroEL ring, thereby capping the opening of the GroEL channel. In Rhodobacter capsulatus (Rhodopseudomonas capsulata), this protein is Co-chaperonin GroES.